A 238-amino-acid chain; its full sequence is Sugar fermentation stimulation protein homolog (238 aa).

This sequence belongs to the SfsA family.

The sequence is that of Sugar fermentation stimulation protein homolog from Haemophilus influenzae (strain PittGG).